The chain runs to 593 residues: MTADNAIFIPPYKADDQDVVVELNNRFGAEAFVAQETRTGMPVLWVKRAQLKEVLSFLRGVAKPYSMLYDLHGVDERLRTQRRGLPAADFSVFYHLLSIERNSDVMIKVSLSEGDLNLPTVTGIWPNANWYEREVWDMFGIDFAGHPHLSRIMMPPTWEGHPLRKDYPARATEFDPYSLTLAKQQLEEESARFNPEAWGMKRQGANEDYMFLNLGPNHPSAHGAFRIVLQLDGEEIVDCVPDIGYHHRGAEKMAERQSWHSFIPYTDRIDYLGGVMNNLPYVLAVEKLAGIKVPQKVDVIRIMLAEFFRITSHLLFLGTYIQDVGAMTPVFFTFTDRQRAYTVIEAITGFRLHPAWYRIGGVAHDLPRGWDKLVKDFVEWLPKRLDEYTKAALQNSILKGRTIGVAAYNTKEALEWGTTGAGLRATGCNFDLRKARPYSGYENFEFEVPLAHNGDAYDRCMVRVEEMRQSIRIIDQCLRNMPEGPYKADHPLTTPPPKERTLQHIETLITHFLQVSWGPVMPANESFQMIEATKGINSYYLTSDGGTMSYRTRIRTPSYPHLQQIPSVIKGSMVADLIAYLGSIDFVMADVDR.

The tract at residues 1–184 is NADH dehydrogenase I subunit C; the sequence is MTADNAIFIP…DPYSLTLAKQ (184 aa). The NADH dehydrogenase I subunit D stretch occupies residues 208–593; it reads DYMFLNLGPN…IDFVMADVDR (386 aa).

In the N-terminal section; belongs to the complex I 30 kDa subunit family. It in the C-terminal section; belongs to the complex I 49 kDa subunit family. As to quaternary structure, NDH-1 is composed of 13 different subunits. Subunits NuoB, CD, E, F, and G constitute the peripheral sector of the complex.

Its subcellular location is the cell inner membrane. It catalyses the reaction a quinone + NADH + 5 H(+)(in) = a quinol + NAD(+) + 4 H(+)(out). In terms of biological role, NDH-1 shuttles electrons from NADH, via FMN and iron-sulfur (Fe-S) centers, to quinones in the respiratory chain. The immediate electron acceptor for the enzyme in this species is believed to be ubiquinone. Couples the redox reaction to proton translocation (for every two electrons transferred, four hydrogen ions are translocated across the cytoplasmic membrane), and thus conserves the redox energy in a proton gradient. The polypeptide is NADH-quinone oxidoreductase subunit C/D (Pseudomonas putida (strain ATCC 700007 / DSM 6899 / JCM 31910 / BCRC 17059 / LMG 24140 / F1)).